Here is a 232-residue protein sequence, read N- to C-terminus: MSYTTPTYTASVSNDILRYMMAYATGNDGCIQSMSALFQSSGESIIAYNVSASSTTQAGFFFQLQNVPQGIGVQIVFFSTTIPQNTFFIDLRFTTTQGNTYQLAQVNTLPPNTNYALVIIVSLTITVQPASNVNISPLLQAFTSFASNQCATAQPPSLSYTGNGFTVFYENTYTSGITFNAILIAQNTLTSSNTIQITATINGNVVATATISTPALGYAYFLFTLTLVFTSE.

The helical transmembrane segment at 209-229 (ATISTPALGYAYFLFTLTLVF) threads the bilayer.

The protein localises to the host membrane. This is an uncharacterized protein from Saccharolobus islandicus (Sulfolobus islandicus).